We begin with the raw amino-acid sequence, 134 residues long: Probable dihydroneopterin aldolase (134 aa).

Residues glutamate 26, tyrosine 59, and 78–79 contribute to the substrate site; that span reads IE. Lysine 106 serves as the catalytic Proton donor/acceptor.

This sequence belongs to the DHNA family.

It catalyses the reaction 7,8-dihydroneopterin = 6-hydroxymethyl-7,8-dihydropterin + glycolaldehyde. It functions in the pathway cofactor biosynthesis; tetrahydrofolate biosynthesis; 2-amino-4-hydroxy-6-hydroxymethyl-7,8-dihydropteridine diphosphate from 7,8-dihydroneopterin triphosphate: step 3/4. Its function is as follows. Catalyzes the conversion of 7,8-dihydroneopterin to 6-hydroxymethyl-7,8-dihydropterin. The sequence is that of Probable dihydroneopterin aldolase (folB) from Chlamydia pneumoniae (Chlamydophila pneumoniae).